The chain runs to 184 residues: NADH-quinone oxidoreductase subunit B (184 aa).

[4Fe-4S] cluster-binding residues include Cys63, Cys64, Cys128, and Cys158.

Belongs to the complex I 20 kDa subunit family. NDH-1 is composed of 14 different subunits. Subunits NuoB, C, D, E, F, and G constitute the peripheral sector of the complex. [4Fe-4S] cluster serves as cofactor.

The protein resides in the cell inner membrane. The enzyme catalyses a quinone + NADH + 5 H(+)(in) = a quinol + NAD(+) + 4 H(+)(out). NDH-1 shuttles electrons from NADH, via FMN and iron-sulfur (Fe-S) centers, to quinones in the respiratory chain. The immediate electron acceptor for the enzyme in this species is believed to be ubiquinone. Couples the redox reaction to proton translocation (for every two electrons transferred, four hydrogen ions are translocated across the cytoplasmic membrane), and thus conserves the redox energy in a proton gradient. This Xylella fastidiosa (strain M23) protein is NADH-quinone oxidoreductase subunit B.